A 421-amino-acid chain; its full sequence is Ankyrin repeat domain-containing protein 61 (421 aa).

ANK repeat units follow at residues 27 to 57, 74 to 103, 107 to 146, 166 to 195, 199 to 228, 233 to 272, 276 to 305, and 309 to 342; these read TLHS…NQPL, QPIF…DPEV, QGFT…NAVL, NKHS…QVNA, SSMT…NVNC, TGNT…QVNA, EGQT…NVNI, and NGES…PLRL.

This is Ankyrin repeat domain-containing protein 61 (Ankrd61) from Mus musculus (Mouse).